Consider the following 308-residue polypeptide: MTIAFLDVAITIEYVSTAISLVCLPINILFVYILFVERNRPPYNTPFFRLCIHLSIADILMELFSTFFFKFPSFGVFPSTFYKENWSVVPIAGMQYLGHAQAFGIIFIAVNRFTAVHYPIKHRQQWWTPKVTKTLLLIQWITPLFFMAPLFSTDFKFLFSHNSGSVIFAASDARFHKNYFLAMAMVDGILINLIVLLLYGAIFIRVHTHVVVRKPGELALRLALSAFIIFICYLALGVCSLLSALTPPPDAWVYRTMWFVVNDVLCNSSALVLLALNRPIRKAFTRHLGVFSYQGVSTKNHNSLLQAV.

The next 7 helical transmembrane spans lie at 15–35, 46–68, 88–108, 135–155, 184–204, 222–242, and 256–276; these read VSTA…YILF, PFFR…STFF, VVPI…IIFI, LLLI…STDF, AMVD…AIFI, LALS…CSLL, and TMWF…LLAL.

This sequence belongs to the nematode receptor-like protein srv family.

The protein localises to the membrane. The chain is Serpentine receptor class V-1 (srv-1) from Caenorhabditis elegans.